The sequence spans 440 residues: Gap junction alpha-8 protein (440 aa).

An intramembrane segment occupies 2 to 12 (GDWSFLGNILE). The Cytoplasmic segment spans residues 13–21 (EVNEHSTVI). The helical transmembrane segment at 22–42 (GRVWLTVLFIFRILILGTAAE) threads the bilayer. Over 43 to 71 (FVWGDEQSDFVCNTQQPGCENVCYDEAFP) the chain is Extracellular. 3 disulfide bridges follow: cysteine 54–cysteine 201, cysteine 61–cysteine 195, and cysteine 65–cysteine 190. The chain crosses the membrane as a helical span at residues 72 to 92 (ISHIRLWVLQIIFVSTPSLMY). Residues 93–161 (VGHAVHHVRM…GTLLRTYVCH (69 aa)) lie on the Cytoplasmic side of the membrane. Residues 111 to 143 (AEELCQQSRSNGGERVPIAPDQASIRKSSSSSK) form a disordered region. Residues 162–182 (IIFKTLFEVGFIVGHYFLYGF) form a helical membrane-spanning segment. At 183 to 210 (RILPLYRCSRWPCPNVVDCFVSRPTEKT) the chain is on the extracellular side. The helical transmembrane segment at 211–231 (IFILFMLSVAFVSLFLNIMEM) threads the bilayer. The Cytoplasmic segment spans residues 232–440 (SHLGMKGIRS…SRARSDDLTI (209 aa)). Residues 338 to 440 (VEREEPPIEE…SRARSDDLTI (103 aa)) form a disordered region. 2 stretches are compositionally biased toward basic and acidic residues: residues 353 to 364 (VGEKKQEAEKVA) and 374 to 399 (PDRE…EKVT). A compositionally biased stretch (low complexity) spans 423-432 (LSRLSKASSR).

This sequence belongs to the connexin family. Alpha-type (group II) subfamily. In terms of assembly, a hemichannel or connexon is composed of a hexamer of connexins. A functional gap junction is formed by the apposition of two hemichannels. Forms heteromeric channels with GJA3. As to expression, detected in eye lens (at protein level). Eye lens.

The protein resides in the cell membrane. It is found in the cell junction. It localises to the gap junction. Structural component of eye lens gap junctions. Gap junctions are dodecameric channels that connect the cytoplasm of adjoining cells. They are formed by the docking of two hexameric hemichannels, one from each cell membrane. Small molecules and ions diffuse from one cell to a neighboring cell via the central pore. The polypeptide is Gap junction alpha-8 protein (Gja8) (Mus musculus (Mouse)).